We begin with the raw amino-acid sequence, 556 residues long: 2-succinyl-5-enolpyruvyl-6-hydroxy-3-cyclohexene-1-carboxylate synthase (556 aa).

The protein belongs to the TPP enzyme family. MenD subfamily. In terms of assembly, homodimer. Mg(2+) is required as a cofactor. Requires Mn(2+) as cofactor. The cofactor is thiamine diphosphate.

The enzyme catalyses isochorismate + 2-oxoglutarate + H(+) = 5-enolpyruvoyl-6-hydroxy-2-succinyl-cyclohex-3-ene-1-carboxylate + CO2. It participates in quinol/quinone metabolism; 1,4-dihydroxy-2-naphthoate biosynthesis; 1,4-dihydroxy-2-naphthoate from chorismate: step 2/7. The protein operates within quinol/quinone metabolism; menaquinone biosynthesis. Functionally, catalyzes the thiamine diphosphate-dependent decarboxylation of 2-oxoglutarate and the subsequent addition of the resulting succinic semialdehyde-thiamine pyrophosphate anion to isochorismate to yield 2-succinyl-5-enolpyruvyl-6-hydroxy-3-cyclohexene-1-carboxylate (SEPHCHC). The polypeptide is 2-succinyl-5-enolpyruvyl-6-hydroxy-3-cyclohexene-1-carboxylate synthase (Saccharopolyspora erythraea (strain ATCC 11635 / DSM 40517 / JCM 4748 / NBRC 13426 / NCIMB 8594 / NRRL 2338)).